A 290-amino-acid polypeptide reads, in one-letter code: S-adenosylmethionine decarboxylase proenzyme (290 aa).

The active-site Schiff-base intermediate with substrate; via pyruvic acid is serine 138. Residue serine 138 is modified to Pyruvic acid (Ser); by autocatalysis. Catalysis depends on histidine 143, which acts as the Proton acceptor; for processing activity. Cysteine 166 acts as the Proton donor; for catalytic activity in catalysis.

Belongs to the prokaryotic AdoMetDC family. Type 2 subfamily. Heterooctamer of four alpha and four beta chains arranged as a tetramer of alpha/beta heterodimers. The cofactor is pyruvate. In terms of processing, is synthesized initially as an inactive proenzyme. Formation of the active enzyme involves a self-maturation process in which the active site pyruvoyl group is generated from an internal serine residue via an autocatalytic post-translational modification. Two non-identical subunits are generated from the proenzyme in this reaction, and the pyruvate is formed at the N-terminus of the alpha chain, which is derived from the carboxyl end of the proenzyme. The post-translation cleavage follows an unusual pathway, termed non-hydrolytic serinolysis, in which the side chain hydroxyl group of the serine supplies its oxygen atom to form the C-terminus of the beta chain, while the remainder of the serine residue undergoes an oxidative deamination to produce ammonia and the pyruvoyl group blocking the N-terminus of the alpha chain.

It catalyses the reaction S-adenosyl-L-methionine + H(+) = S-adenosyl 3-(methylsulfanyl)propylamine + CO2. The protein operates within amine and polyamine biosynthesis; S-adenosylmethioninamine biosynthesis; S-adenosylmethioninamine from S-adenosyl-L-methionine: step 1/1. In terms of biological role, catalyzes the decarboxylation of S-adenosylmethionine to S-adenosylmethioninamine (dcAdoMet), the propylamine donor required for the synthesis of the polyamines spermine and spermidine from the diamine putrescine. The chain is S-adenosylmethionine decarboxylase proenzyme from Heliobacterium modesticaldum (strain ATCC 51547 / Ice1).